The chain runs to 302 residues: tRNA pseudouridine synthase B (302 aa).

D45 serves as the catalytic Nucleophile.

The protein belongs to the pseudouridine synthase TruB family. Type 1 subfamily.

The enzyme catalyses uridine(55) in tRNA = pseudouridine(55) in tRNA. In terms of biological role, responsible for synthesis of pseudouridine from uracil-55 in the psi GC loop of transfer RNAs. This Francisella tularensis subsp. holarctica (strain FTNF002-00 / FTA) protein is tRNA pseudouridine synthase B.